A 447-amino-acid chain; its full sequence is uncharacterized protein (447 aa).

Transmembrane regions (helical) follow at residues 380-400 (VLEI…LLLT) and 412-432 (ILGF…GVYV).

Its subcellular location is the cell membrane. This is an uncharacterized protein from Methanocaldococcus jannaschii (strain ATCC 43067 / DSM 2661 / JAL-1 / JCM 10045 / NBRC 100440) (Methanococcus jannaschii).